The following is a 193-amino-acid chain: 7-methyl-GTP pyrophosphatase (193 aa).

Residue Asp70 is the Proton acceptor of the active site.

It belongs to the Maf family. YceF subfamily. A divalent metal cation serves as cofactor.

The protein localises to the cytoplasm. The enzyme catalyses N(7)-methyl-GTP + H2O = N(7)-methyl-GMP + diphosphate + H(+). In terms of biological role, nucleoside triphosphate pyrophosphatase that hydrolyzes 7-methyl-GTP (m(7)GTP). May have a dual role in cell division arrest and in preventing the incorporation of modified nucleotides into cellular nucleic acids. This is 7-methyl-GTP pyrophosphatase from Vibrio cholerae serotype O1 (strain ATCC 39315 / El Tor Inaba N16961).